Reading from the N-terminus, the 281-residue chain is Arylamine N-acetyltransferase / N-hydroxyarylamine O-acetyltransferase (281 aa).

The active-site Acyl-thioester intermediate is Cys-69. Residues His-107 and Asp-122 contribute to the active site.

Belongs to the arylamine N-acetyltransferase family. As to quaternary structure, monomer and homodimer.

Its subcellular location is the cytoplasm. It catalyses the reaction an arylamine + acetyl-CoA = an N-acetylarylamine + CoA. The catalysed reaction is an N-hydroxyarylamine + acetyl-CoA = an N-acetoxyarylamine + CoA. Inhibited by N-ethylmaleimide and iodoacetamide. Functionally, catalyzes both the acetyl-CoA-dependent N-acetylation of aromatic amines and the O-acetylation of N-hydroxyarylamines. In vitro, catalyzes the O-acetylation of N-hydroxy-Glu-P-1, and the N-acetylation of isoniazid and 2-aminofluorene. In Salmonella typhimurium (strain LT2 / SGSC1412 / ATCC 700720), this protein is Arylamine N-acetyltransferase / N-hydroxyarylamine O-acetyltransferase (nhoA).